The primary structure comprises 164 residues: Phosphopantetheine adenylyltransferase (164 aa).

T9 contributes to the substrate binding site. ATP-binding positions include 9–10 and H17; that span reads TF. Residues K41, T76, and R90 each coordinate substrate. Residues 91 to 93, E101, and 126 to 132 each bind ATP; these read GLR and YQFVSSS.

Belongs to the bacterial CoaD family. Homohexamer. Mg(2+) serves as cofactor.

It is found in the cytoplasm. The enzyme catalyses (R)-4'-phosphopantetheine + ATP + H(+) = 3'-dephospho-CoA + diphosphate. Its pathway is cofactor biosynthesis; coenzyme A biosynthesis; CoA from (R)-pantothenate: step 4/5. Its function is as follows. Reversibly transfers an adenylyl group from ATP to 4'-phosphopantetheine, yielding dephospho-CoA (dPCoA) and pyrophosphate. This Coprothermobacter proteolyticus (strain ATCC 35245 / DSM 5265 / OCM 4 / BT) protein is Phosphopantetheine adenylyltransferase.